Reading from the N-terminus, the 405-residue chain is Protein NDRG4 (405 aa).

A disordered region spans residues 352 to 405; it reads AGAVPSASMTRLARSRTASLTSASSVDGARPRPCTQSESSDGIGQINHTMEVSC. Over residues 361 to 376 the composition is skewed to low complexity; sequence TRLARSRTASLTSASS. Over residues 385-405 the composition is skewed to polar residues; sequence CTQSESSDGIGQINHTMEVSC.

Belongs to the NDRG family.

It localises to the cytoplasm. It is found in the cytosol. Its function is as follows. Contributes to the maintenance of intracerebral BDNF levels within the normal range. May enhance growth factor-induced ERK1 and ERK2 phosphorylation. May attenuate growth factor-promoted ELK1 phosphorylation in a microtubule-dependent manner. The chain is Protein NDRG4 from Xenopus tropicalis (Western clawed frog).